Consider the following 72-residue polypeptide: Translation initiation factor IF-1 (72 aa).

Positions 1–72 constitute an S1-like domain; sequence MSKEEVLEFS…TKGRITYRYK (72 aa).

It belongs to the IF-1 family. In terms of assembly, component of the 30S ribosomal translation pre-initiation complex which assembles on the 30S ribosome in the order IF-2 and IF-3, IF-1 and N-formylmethionyl-tRNA(fMet); mRNA recruitment can occur at any time during PIC assembly.

It localises to the cytoplasm. In terms of biological role, one of the essential components for the initiation of protein synthesis. Stabilizes the binding of IF-2 and IF-3 on the 30S subunit to which N-formylmethionyl-tRNA(fMet) subsequently binds. Helps modulate mRNA selection, yielding the 30S pre-initiation complex (PIC). Upon addition of the 50S ribosomal subunit IF-1, IF-2 and IF-3 are released leaving the mature 70S translation initiation complex. In Bartonella tribocorum (strain CIP 105476 / IBS 506), this protein is Translation initiation factor IF-1.